The chain runs to 297 residues: GTPase Era (297 aa).

Positions 7–174 (RSGFVSIIGR…VEVVHGFIPA (168 aa)) constitute an Era-type G domain. Residues 15–22 (GRPNVGKS) form a G1 region. 15–22 (GRPNVGKS) contributes to the GTP binding site. The interval 41 to 45 (QTTRN) is G2. Positions 62 to 65 (DTPG) are G3. Residues 62-66 (DTPGI) and 124-127 (NKID) each bind GTP. The segment at 124-127 (NKID) is G4. The G5 stretch occupies residues 153-155 (VSA). The region spanning 205–282 (THDEVPYSVA…FLELFVRVSK (78 aa)) is the KH type-2 domain.

It belongs to the TRAFAC class TrmE-Era-EngA-EngB-Septin-like GTPase superfamily. Era GTPase family. As to quaternary structure, monomer.

It localises to the cytoplasm. The protein localises to the cell inner membrane. Functionally, an essential GTPase that binds both GDP and GTP, with rapid nucleotide exchange. Plays a role in 16S rRNA processing and 30S ribosomal subunit biogenesis and possibly also in cell cycle regulation and energy metabolism. The chain is GTPase Era from Geotalea uraniireducens (strain Rf4) (Geobacter uraniireducens).